Reading from the N-terminus, the 160-residue chain is 6,7-dimethyl-8-ribityllumazine synthase (160 aa).

Residues Trp28, 59-61 (ALE), and 81-83 (CVI) each bind 5-amino-6-(D-ribitylamino)uracil. 86-87 (ET) is a binding site for (2S)-2-hydroxy-3-oxobutyl phosphate. His89 functions as the Proton donor in the catalytic mechanism. 5-amino-6-(D-ribitylamino)uracil is bound at residue Asn114. Arg128 serves as a coordination point for (2S)-2-hydroxy-3-oxobutyl phosphate.

This sequence belongs to the DMRL synthase family.

The enzyme catalyses (2S)-2-hydroxy-3-oxobutyl phosphate + 5-amino-6-(D-ribitylamino)uracil = 6,7-dimethyl-8-(1-D-ribityl)lumazine + phosphate + 2 H2O + H(+). Its pathway is cofactor biosynthesis; riboflavin biosynthesis; riboflavin from 2-hydroxy-3-oxobutyl phosphate and 5-amino-6-(D-ribitylamino)uracil: step 1/2. In terms of biological role, catalyzes the formation of 6,7-dimethyl-8-ribityllumazine by condensation of 5-amino-6-(D-ribitylamino)uracil with 3,4-dihydroxy-2-butanone 4-phosphate. This is the penultimate step in the biosynthesis of riboflavin. This chain is 6,7-dimethyl-8-ribityllumazine synthase, found in Corynebacterium urealyticum (strain ATCC 43042 / DSM 7109).